A 499-amino-acid polypeptide reads, in one-letter code: Glutelin type-A 2 (499 aa).

The signal sequence occupies residues 1–24 (MASINRPIVFFTVCLFLLCDGSLA). Intrachain disulfides connect Cys-46–Cys-79 and Cys-122–Cys-313. A Cupin type-1 1 domain is found at 51 to 248 (LQAFEPIRSV…AFGISNQVAR (198 aa)). The interval 280–300 (EQGQMQSREHYQEGGYQQSQY) is disordered. The 150-residue stretch at 319–468 (QNIDNPNRAD…AYRISREEAQ (150 aa)) folds into the Cupin type-1 2 domain.

This sequence belongs to the 11S seed storage protein (globulins) family. As to quaternary structure, hexamer; each subunit is composed of an acidic and a basic chain derived from a single precursor and linked by a disulfide bond.

Seed storage protein. The protein is Glutelin type-A 2 (GLUA2) of Oryza sativa subsp. japonica (Rice).